We begin with the raw amino-acid sequence, 306 residues long: tRNA dimethylallyltransferase (306 aa).

9 to 16 (GPTGIGKT) serves as a coordination point for ATP. Residue 11-16 (TGIGKT) participates in substrate binding. The interaction with substrate tRNA stretch occupies residues 34–37 (DSMQ).

The protein belongs to the IPP transferase family. As to quaternary structure, monomer. Requires Mg(2+) as cofactor.

It catalyses the reaction adenosine(37) in tRNA + dimethylallyl diphosphate = N(6)-dimethylallyladenosine(37) in tRNA + diphosphate. Catalyzes the transfer of a dimethylallyl group onto the adenine at position 37 in tRNAs that read codons beginning with uridine, leading to the formation of N6-(dimethylallyl)adenosine (i(6)A). The protein is tRNA dimethylallyltransferase of Lactobacillus johnsonii (strain CNCM I-12250 / La1 / NCC 533).